Consider the following 31-residue polypeptide: Cytochrome b6-f complex subunit 6 (31 aa).

A helical membrane pass occupies residues 4–24; the sequence is ITSYFGFLLVVLTITSALFIG.

It belongs to the PetL family. In terms of assembly, the 4 large subunits of the cytochrome b6-f complex are cytochrome b6, subunit IV (17 kDa polypeptide, PetD), cytochrome f and the Rieske protein, while the 4 small subunits are PetG, PetL, PetM and PetN. The complex functions as a dimer.

It is found in the plastid. The protein localises to the chloroplast thylakoid membrane. Its function is as follows. Component of the cytochrome b6-f complex, which mediates electron transfer between photosystem II (PSII) and photosystem I (PSI), cyclic electron flow around PSI, and state transitions. PetL is important for photoautotrophic growth as well as for electron transfer efficiency and stability of the cytochrome b6-f complex. The sequence is that of Cytochrome b6-f complex subunit 6 from Jasminum nudiflorum (Winter jasmine).